Consider the following 60-residue polypeptide: MKIFLPVLVMLILCSMCLLTEGQVSTNKKCSNTSQCYKTCEKVVGVAAGKCMNGKCICYP.

The N-terminal stretch at 1–22 is a signal peptide; that stretch reads MKIFLPVLVMLILCSMCLLTEG. 3 disulfides stabilise this stretch: C30–C51, C36–C56, and C40–C58.

It belongs to the short scorpion toxin superfamily. Potassium channel inhibitor family. Alpha-KTx 15 subfamily. In terms of tissue distribution, expressed by the venom gland.

It localises to the secreted. Blocker of A-type voltage-gated potassium channels of cerebellar granular cells. May also inhibit Kv4/KCND when coexpressed with DPP6 or DPP10. The occlusion of the outer entry of the K(+) conducting pore is partially reversible and affects both open and closed channels. It shares the same target in rat brain than BmTX3 (AC Q8I0L5) and AmmTX3 (AC P60208). Has been shown to weakly inhibit TRPV1 channels. The protein is Potassium channel toxin alpha-KTx 15.9 of Lychas mucronatus (Chinese swimming scorpion).